The primary structure comprises 351 residues: Anthranilate phosphoribosyltransferase (351 aa).

5-phospho-alpha-D-ribose 1-diphosphate-binding positions include Gly-90, 93–94 (GD), Thr-98, 100–103 (NIST), 118–126 (KHGNRSASG), and Ser-130. Residue Gly-90 coordinates anthranilate. Ser-102 is a Mg(2+) binding site. An anthranilate-binding site is contributed by Asn-121. Residue Arg-176 coordinates anthranilate. Residues Asp-235 and Glu-236 each contribute to the Mg(2+) site.

Belongs to the anthranilate phosphoribosyltransferase family. As to quaternary structure, homodimer. Requires Mg(2+) as cofactor.

It catalyses the reaction N-(5-phospho-beta-D-ribosyl)anthranilate + diphosphate = 5-phospho-alpha-D-ribose 1-diphosphate + anthranilate. It functions in the pathway amino-acid biosynthesis; L-tryptophan biosynthesis; L-tryptophan from chorismate: step 2/5. Catalyzes the transfer of the phosphoribosyl group of 5-phosphorylribose-1-pyrophosphate (PRPP) to anthranilate to yield N-(5'-phosphoribosyl)-anthranilate (PRA). The polypeptide is Anthranilate phosphoribosyltransferase (Prochlorococcus marinus (strain MIT 9313)).